The chain runs to 787 residues: Integrin beta-6 (787 aa).

A signal peptide spans Met1 to Gly21. One can recognise a PSI domain in the interval Gly22–Gln71. Residues Gly22–Pro708 lie on the Extracellular side of the membrane. 19 cysteine pairs are disulfide-bonded: Cys23–Cys41, Cys31–Cys454, Cys34–Cys59, Cys44–Cys70, Cys197–Cys204, Cys252–Cys293, Cys394–Cys406, Cys426–Cys452, Cys456–Cys476, Cys467–Cys479, Cys481–Cys490, Cys492–Cys519, Cys502–Cys517, Cys511–Cys522, Cys524–Cys537, Cys539–Cys560, Cys544–Cys558, Cys552–Cys563, and Cys565–Cys574. Residues Asn48 and Asn97 are each glycosylated (N-linked (GlcNAc...) asparagine). Positions Tyr131–Leu371 constitute a VWFA domain. Mg(2+)-binding residues include Asp140, Ser142, and Ser144. Ca(2+) is bound by residues Ser144, Asp147, Asp148, and Glu179. Residues Asn235, Asp237, Pro239, and Glu240 each coordinate Ca(2+). Glu240 lines the Mg(2+) pocket. Asn260 carries N-linked (GlcNAc...) asparagine glycosylation. Ca(2+) contacts are provided by Asp271 and Lys355. Asn387 carries N-linked (GlcNAc...) asparagine glycosylation. A glycan (N-linked (GlcNAc...) asparagine) is linked at Asn418. I-EGF domains are found at residues Cys456–Glu491, Cys492–Gln538, Cys539–Asn575, and Cys576–Glu615. Asn463 and Asn471 each carry an N-linked (GlcNAc...) asparagine glycan. A glycan (N-linked (GlcNAc...) asparagine) is linked at Asn541. Asn575 carries N-linked (GlcNAc...) asparagine glycosylation. 9 cysteine pairs are disulfide-bonded: Cys576–Cys599, Cys583–Cys597, Cys591–Cys602, Cys604–Cys614, Cys617–Cys620, Cys624–Cys669, Cys630–Cys649, Cys633–Cys645, and Cys677–Cys701. A helical transmembrane segment spans residues Met709–Trp729. An interaction with HAX1 region spans residues Lys730–Thr757. Over Lys730–Gly787 the chain is Cytoplasmic.

Belongs to the integrin beta chain family. In terms of assembly, heterodimer of an alpha and a beta subunit. Interacts with FLNB. Interacts with HAX1. ITGAV:ITGB6 interacts with FBN1. ITGAV:ITGB6 interacts with TGFB1.

The protein localises to the cell membrane. It is found in the cell junction. The protein resides in the focal adhesion. Functionally, integrin alpha-V:beta-6 (ITGAV:ITGB6) is a receptor for fibronectin and cytotactin. It recognizes the sequence R-G-D in its ligands. ITGAV:ITGB6 acts as a receptor for fibrillin-1 (FBN1) and mediates R-G-D-dependent cell adhesion to FBN1. Integrin alpha-V:beta-6 (ITGAV:ITGB6) mediates R-G-D-dependent release of transforming growth factor beta-1 (TGF-beta-1) from regulatory Latency-associated peptide (LAP), thereby playing a key role in TGF-beta-1 activation. The chain is Integrin beta-6 (Itgb6) from Mus musculus (Mouse).